A 360-amino-acid polypeptide reads, in one-letter code: Threonine synthase (360 aa).

K69 bears the N6-(pyridoxal phosphate)lysine mark. Residues N95, 196 to 200 (GNAGN), and T326 each bind pyridoxal 5'-phosphate.

This sequence belongs to the threonine synthase family. Homodimer. The cofactor is pyridoxal 5'-phosphate.

The catalysed reaction is O-phospho-L-homoserine + H2O = L-threonine + phosphate. Its pathway is amino-acid biosynthesis; L-threonine biosynthesis; L-threonine from L-aspartate: step 5/5. Functionally, catalyzes the gamma-elimination of phosphate from L-phosphohomoserine and the beta-addition of water to produce L-threonine. This Mycobacterium leprae (strain TN) protein is Threonine synthase (thrC).